A 165-amino-acid chain; its full sequence is Shikimate kinase (165 aa).

12 to 17 (GCGKST) lines the ATP pocket. S16 provides a ligand contact to Mg(2+). Substrate is bound by residues D34, R57, and G79. R116 provides a ligand contact to ATP. Residue R133 coordinates substrate.

Belongs to the shikimate kinase family. Monomer. Mg(2+) is required as a cofactor.

Its subcellular location is the cytoplasm. The catalysed reaction is shikimate + ATP = 3-phosphoshikimate + ADP + H(+). Its pathway is metabolic intermediate biosynthesis; chorismate biosynthesis; chorismate from D-erythrose 4-phosphate and phosphoenolpyruvate: step 5/7. Functionally, catalyzes the specific phosphorylation of the 3-hydroxyl group of shikimic acid using ATP as a cosubstrate. This is Shikimate kinase from Clostridium botulinum (strain Alaska E43 / Type E3).